The primary structure comprises 193 residues: Acyl carrier protein phosphodiesterase (193 aa).

Belongs to the AcpH family.

The catalysed reaction is holo-[ACP] + H2O = apo-[ACP] + (R)-4'-phosphopantetheine + H(+). Functionally, converts holo-ACP to apo-ACP by hydrolytic cleavage of the phosphopantetheine prosthetic group from ACP. This is Acyl carrier protein phosphodiesterase from Yersinia enterocolitica serotype O:8 / biotype 1B (strain NCTC 13174 / 8081).